The sequence spans 185 residues: Translation initiation factor IF-3 (185 aa).

This sequence belongs to the IF-3 family. In terms of assembly, monomer.

It localises to the cytoplasm. In terms of biological role, IF-3 binds to the 30S ribosomal subunit and shifts the equilibrium between 70S ribosomes and their 50S and 30S subunits in favor of the free subunits, thus enhancing the availability of 30S subunits on which protein synthesis initiation begins. This chain is Translation initiation factor IF-3, found in Coxiella burnetii (strain RSA 493 / Nine Mile phase I).